A 159-amino-acid polypeptide reads, in one-letter code: NAD(P)H-quinone oxidoreductase subunit I, chloroplastic (159 aa).

4Fe-4S ferredoxin-type domains lie at 55-84 (GRIH…VDWN) and 95-124 (KNYS…MTEE). [4Fe-4S] cluster contacts are provided by cysteine 64, cysteine 67, cysteine 70, cysteine 74, cysteine 104, cysteine 107, cysteine 110, and cysteine 114.

This sequence belongs to the complex I 23 kDa subunit family. As to quaternary structure, NDH is composed of at least 16 different subunits, 5 of which are encoded in the nucleus. The cofactor is [4Fe-4S] cluster.

Its subcellular location is the plastid. It localises to the chloroplast thylakoid membrane. It carries out the reaction a plastoquinone + NADH + (n+1) H(+)(in) = a plastoquinol + NAD(+) + n H(+)(out). The catalysed reaction is a plastoquinone + NADPH + (n+1) H(+)(in) = a plastoquinol + NADP(+) + n H(+)(out). Functionally, NDH shuttles electrons from NAD(P)H:plastoquinone, via FMN and iron-sulfur (Fe-S) centers, to quinones in the photosynthetic chain and possibly in a chloroplast respiratory chain. The immediate electron acceptor for the enzyme in this species is believed to be plastoquinone. Couples the redox reaction to proton translocation, and thus conserves the redox energy in a proton gradient. In Chara vulgaris (Common stonewort), this protein is NAD(P)H-quinone oxidoreductase subunit I, chloroplastic.